Reading from the N-terminus, the 147-residue chain is Interleukin-4 (147 aa).

A signal peptide spans 1–24 (MGLPAQLPVTLLCLLAGTAHFIQG). An intrachain disulfide couples cysteine 48 to cysteine 88. A glycan (N-linked (GlcNAc...) asparagine) is linked at asparagine 62.

Belongs to the IL-4/IL-13 family.

The protein localises to the secreted. In terms of biological role, participates in at least several B-cell activation processes as well as of other cell types. It is a costimulator of DNA-synthesis. It induces the expression of class II MHC molecules on resting B-cells. It enhances both secretion and cell surface expression of IgE and IgG1. It also regulates the expression of the low affinity Fc receptor for IgE (CD23) on both lymphocytes and monocytes. Positively regulates IL31RA expression in macrophages. Stimulates autophagy in dendritic cells by interfering with mTORC1 signaling and through the induction of RUFY4. The chain is Interleukin-4 (IL4) from Oryctolagus cuniculus (Rabbit).